The chain runs to 141 residues: Hemoglobin subunit alpha-D (141 aa).

A Globin domain is found at 1-141; sequence MLTADDKKIL…VAAVLAEKYR (141 aa). Residues histidine 58 and histidine 87 each coordinate heme b.

The protein belongs to the globin family. As to quaternary structure, heterotetramer of two alpha-D chains and two beta chains. As to expression, red blood cells.

Functionally, involved in oxygen transport from the lung to the various peripheral tissues. The protein is Hemoglobin subunit alpha-D (HBAD) of Branta canadensis (Canada goose).